The following is a 336-amino-acid chain: UPF0284 protein Pcal_1534 (336 aa).

The protein belongs to the UPF0284 family.

In Pyrobaculum calidifontis (strain DSM 21063 / JCM 11548 / VA1), this protein is UPF0284 protein Pcal_1534.